Consider the following 601-residue polypeptide: Molybdenum cofactor synthesis protein cinnamon (601 aa).

Residues 3 to 153 (SITFGVLTIS…TISALLPHAV (151 aa)) form an MPT adenylyltransferase region. The disordered stretch occupies residues 173–195 (SAQKSHICPHKTGTGTDSDRNSP). The tract at residues 184-596 (TGTGTDSDRN…FPASVLRFDF (413 aa)) is MPT Mo-transferase. S376 carries the phosphoserine modification.

The protein in the N-terminal section; belongs to the MoaB/Mog family. It in the C-terminal section; belongs to the MoeA family. Mg(2+) is required as a cofactor.

The enzyme catalyses molybdopterin + ATP + H(+) = adenylyl-molybdopterin + diphosphate. The catalysed reaction is adenylyl-molybdopterin + molybdate = Mo-molybdopterin + AMP + H(+). The protein operates within cofactor biosynthesis; molybdopterin biosynthesis. Functionally, catalyzes two steps in the biosynthesis of the molybdenum cofactor. In the first step, molybdopterin is adenylated. Subsequently, molybdate is inserted into adenylated molybdopterin and AMP is released. This chain is Molybdenum cofactor synthesis protein cinnamon (cin), found in Drosophila melanogaster (Fruit fly).